Here is a 522-residue protein sequence, read N- to C-terminus: 2-isopropylmalate synthase (522 aa).

The region spanning 5 to 267 (VIIFDTTLRD…ETGINAKEIH (263 aa)) is the Pyruvate carboxyltransferase domain. Asp14, His202, His204, and Asn238 together coordinate Mn(2+). Residues 392–522 (QLQQLVVQSD…MHKNRELGGV (131 aa)) are regulatory domain.

This sequence belongs to the alpha-IPM synthase/homocitrate synthase family. LeuA type 1 subfamily. Homodimer. The cofactor is Mn(2+).

The protein localises to the cytoplasm. The enzyme catalyses 3-methyl-2-oxobutanoate + acetyl-CoA + H2O = (2S)-2-isopropylmalate + CoA + H(+). It functions in the pathway amino-acid biosynthesis; L-leucine biosynthesis; L-leucine from 3-methyl-2-oxobutanoate: step 1/4. Its function is as follows. Catalyzes the condensation of the acetyl group of acetyl-CoA with 3-methyl-2-oxobutanoate (2-ketoisovalerate) to form 3-carboxy-3-hydroxy-4-methylpentanoate (2-isopropylmalate). This is 2-isopropylmalate synthase from Shewanella sp. (strain ANA-3).